The chain runs to 384 residues: Probable beta-1,3-galactosyltransferase 1 (384 aa).

The helical; Signal-anchor for type II membrane protein transmembrane segment at 21 to 43 threads the bilayer; sequence SVFFMCLASFCLGMFFTNRMWNI. N-linked (GlcNAc...) asparagine glycosylation is found at asparagine 73 and asparagine 105.

The protein belongs to the glycosyltransferase 31 family. The cofactor is Mn(2+).

It localises to the golgi apparatus membrane. The protein operates within protein modification; protein glycosylation. Functionally, beta-1,3-galactosyltransferase that transfers galactose from UDP-galactose to substrates with a terminal glycosyl residue. In Arabidopsis thaliana (Mouse-ear cress), this protein is Probable beta-1,3-galactosyltransferase 1 (B3GALT1).